A 190-amino-acid chain; its full sequence is dTTP/UTP pyrophosphatase (190 aa).

Aspartate 71 serves as the catalytic Proton acceptor.

Belongs to the Maf family. YhdE subfamily. It depends on a divalent metal cation as a cofactor.

It localises to the cytoplasm. It carries out the reaction dTTP + H2O = dTMP + diphosphate + H(+). The catalysed reaction is UTP + H2O = UMP + diphosphate + H(+). Its function is as follows. Nucleoside triphosphate pyrophosphatase that hydrolyzes dTTP and UTP. May have a dual role in cell division arrest and in preventing the incorporation of modified nucleotides into cellular nucleic acids. In Xanthomonas axonopodis pv. citri (strain 306), this protein is dTTP/UTP pyrophosphatase.